The chain runs to 466 residues: Cysteine--tRNA ligase 1 (466 aa).

Cys-27 is a Zn(2+) binding site. The short motif at 29 to 39 (PTVQSPPHIGH) is the 'HIGH' region element. Zn(2+)-binding residues include Cys-211, His-236, and Glu-240. The short motif at 267–271 (KMSKS) is the 'KMSKS' region element. Lys-270 contributes to the ATP binding site.

This sequence belongs to the class-I aminoacyl-tRNA synthetase family. Monomer. It depends on Zn(2+) as a cofactor.

It is found in the cytoplasm. It catalyses the reaction tRNA(Cys) + L-cysteine + ATP = L-cysteinyl-tRNA(Cys) + AMP + diphosphate. This chain is Cysteine--tRNA ligase 1, found in Tropheryma whipplei (strain TW08/27) (Whipple's bacillus).